The chain runs to 157 residues: Peptide methionine sulfoxide reductase MsrA (157 aa).

The active site involves Cys-10.

It belongs to the MsrA Met sulfoxide reductase family.

It catalyses the reaction L-methionyl-[protein] + [thioredoxin]-disulfide + H2O = L-methionyl-(S)-S-oxide-[protein] + [thioredoxin]-dithiol. It carries out the reaction [thioredoxin]-disulfide + L-methionine + H2O = L-methionine (S)-S-oxide + [thioredoxin]-dithiol. Its function is as follows. Has an important function as a repair enzyme for proteins that have been inactivated by oxidation. Catalyzes the reversible oxidation-reduction of methionine sulfoxide in proteins to methionine. The protein is Peptide methionine sulfoxide reductase MsrA of Clostridium perfringens (strain ATCC 13124 / DSM 756 / JCM 1290 / NCIMB 6125 / NCTC 8237 / Type A).